The sequence spans 313 residues: Small ribosomal subunit biogenesis GTPase RsgA (313 aa).

In terms of domain architecture, CP-type G spans 82-235 (REKLIAANAT…IIDSPGIQQF (154 aa)). GTP is bound by residues 127–130 (NKTD) and 177–185 (GQSGMGKST). Zn(2+) contacts are provided by Cys259, Cys264, His266, and Cys272.

Belongs to the TRAFAC class YlqF/YawG GTPase family. RsgA subfamily. In terms of assembly, monomer. Associates with 30S ribosomal subunit, binds 16S rRNA. The cofactor is Zn(2+).

The protein localises to the cytoplasm. In terms of biological role, one of several proteins that assist in the late maturation steps of the functional core of the 30S ribosomal subunit. Helps release RbfA from mature subunits. May play a role in the assembly of ribosomal proteins into the subunit. Circularly permuted GTPase that catalyzes slow GTP hydrolysis, GTPase activity is stimulated by the 30S ribosomal subunit. The protein is Small ribosomal subunit biogenesis GTPase RsgA of Nitrosospira multiformis (strain ATCC 25196 / NCIMB 11849 / C 71).